A 384-amino-acid polypeptide reads, in one-letter code: 8-amino-7-oxononanoate synthase (384 aa).

R21 lines the substrate pocket. 108-109 (GF) contributes to the pyridoxal 5'-phosphate binding site. H133 is a binding site for substrate. Residues S179, H207, and T233 each coordinate pyridoxal 5'-phosphate. The residue at position 236 (K236) is an N6-(pyridoxal phosphate)lysine. Residue T352 coordinates substrate.

It belongs to the class-II pyridoxal-phosphate-dependent aminotransferase family. BioF subfamily. As to quaternary structure, homodimer. Pyridoxal 5'-phosphate serves as cofactor.

The catalysed reaction is 6-carboxyhexanoyl-[ACP] + L-alanine + H(+) = (8S)-8-amino-7-oxononanoate + holo-[ACP] + CO2. It participates in cofactor biosynthesis; biotin biosynthesis. In terms of biological role, catalyzes the decarboxylative condensation of pimeloyl-[acyl-carrier protein] and L-alanine to produce 8-amino-7-oxononanoate (AON), [acyl-carrier protein], and carbon dioxide. The protein is 8-amino-7-oxononanoate synthase of Shigella boydii serotype 18 (strain CDC 3083-94 / BS512).